The following is a 430-amino-acid chain: Serine--tRNA ligase (430 aa).

T235–E237 serves as a coordination point for L-serine. ATP contacts are provided by residues R266–E268 and V282. E289 contacts L-serine. E353–S356 serves as a coordination point for ATP. S389 is an L-serine binding site.

It belongs to the class-II aminoacyl-tRNA synthetase family. Type-1 seryl-tRNA synthetase subfamily. In terms of assembly, homodimer. The tRNA molecule binds across the dimer.

The protein localises to the cytoplasm. The catalysed reaction is tRNA(Ser) + L-serine + ATP = L-seryl-tRNA(Ser) + AMP + diphosphate + H(+). It catalyses the reaction tRNA(Sec) + L-serine + ATP = L-seryl-tRNA(Sec) + AMP + diphosphate + H(+). It functions in the pathway aminoacyl-tRNA biosynthesis; selenocysteinyl-tRNA(Sec) biosynthesis; L-seryl-tRNA(Sec) from L-serine and tRNA(Sec): step 1/1. Its function is as follows. Catalyzes the attachment of serine to tRNA(Ser). Is also able to aminoacylate tRNA(Sec) with serine, to form the misacylated tRNA L-seryl-tRNA(Sec), which will be further converted into selenocysteinyl-tRNA(Sec). This chain is Serine--tRNA ligase, found in Chlorobium phaeovibrioides (strain DSM 265 / 1930) (Prosthecochloris vibrioformis (strain DSM 265)).